Here is a 305-residue protein sequence, read N- to C-terminus: MAREKSTDDGGGWKKFLWDSEKKQVLGRTGTSWFKIFVFYLIFYGCLAGIFIGTIQVMLLTISDFEPKYQDRVAPPGLSHSPYAVKTEISFSVSNPNSYENHVNGLKELLKNYNESKQDGNTPFEDCGVIPADYITRGPIEESQGQKRVCRFLLQWLKNCSGIDDPSYGYSEGKPCIIAKLNRILGFYPKPPKNGTDLPEALQANYNQYVLPIHCQAKKEEDKVRIGTIEYFGMGGVGGFPLQYYPYYGKRLQKNYLQPLVGIQFTNLTHNVELRVECKVFGDNIAYSEKDRSLGRFEVKIEVKS.

Residues 1–32 are Cytoplasmic-facing; that stretch reads MAREKSTDDGGGWKKFLWDSEKKQVLGRTGTS. Residues 33–53 form a helical; Signal-anchor for type II membrane protein membrane-spanning segment; the sequence is WFKIFVFYLIFYGCLAGIFIG. Residues 54 to 305 lie on the Extracellular side of the membrane; that stretch reads TIQVMLLTIS…RFEVKIEVKS (252 aa). An N-linked (GlcNAc...) asparagine glycan is attached at N114. A disulfide bond links C127 and C150. The N-linked (GlcNAc...) asparagine glycan is linked to N159. C160 and C176 form a disulfide bridge. N-linked (GlcNAc...) asparagine glycans are attached at residues N194 and N267. An intrachain disulfide couples C215 to C278.

It belongs to the X(+)/potassium ATPases subunit beta family. In terms of assembly, the sodium/potassium-transporting ATPase is composed of a catalytic alpha subunit, an auxiliary non-catalytic beta subunit and an additional regulatory subunit.

It localises to the cell membrane. This is the non-catalytic component of the active enzyme, which catalyzes the hydrolysis of ATP coupled with the exchange of Na(+) and K(+) ions across the plasma membrane. The beta subunit regulates, through assembly of alpha/beta heterodimers, the number of sodium pumps transported to the plasma membrane. In Tetronarce californica (Pacific electric ray), this protein is Sodium/potassium-transporting ATPase subunit beta-1 (atp1b1).